The following is a 478-amino-acid chain: UDP-N-acetylmuramate--L-alanine ligase (478 aa).

112–118 (GTHGKTT) lines the ATP pocket.

This sequence belongs to the MurCDEF family.

It is found in the cytoplasm. It catalyses the reaction UDP-N-acetyl-alpha-D-muramate + L-alanine + ATP = UDP-N-acetyl-alpha-D-muramoyl-L-alanine + ADP + phosphate + H(+). It participates in cell wall biogenesis; peptidoglycan biosynthesis. In terms of biological role, cell wall formation. The sequence is that of UDP-N-acetylmuramate--L-alanine ligase from Polaromonas naphthalenivorans (strain CJ2).